We begin with the raw amino-acid sequence, 120 residues long: KLVALYQKEMSYAGEIVPLSELFFRDEQILGDDEQEVINGEQVPELMNHLYGKLEVLEPFEAAEIKKTIKEVQKETGIKGKQLFMPIRVAVTGQMHGPELPNTIEVLGREKVLSRLKKYV.

Belongs to the class-I aminoacyl-tRNA synthetase family. Glutamate--tRNA ligase type 1 subfamily. In terms of assembly, monomer.

Its subcellular location is the cytoplasm. The enzyme catalyses tRNA(Glu) + L-glutamate + ATP = L-glutamyl-tRNA(Glu) + AMP + diphosphate. Its function is as follows. Catalyzes the attachment of glutamate to tRNA(Glu) in a two-step reaction: glutamate is first activated by ATP to form Glu-AMP and then transferred to the acceptor end of tRNA(Glu). This chain is Glutamate--tRNA ligase (gltX), found in Staphylococcus xylosus.